The chain runs to 555 residues: mRNA cleavage and polyadenylation factor CLP1 (555 aa).

ATP-binding positions include E30, K69, and 156-161 (YLGKTS). Residues 431-451 (DDFEHITNEDENGGDGNDGDG) form a disordered region.

The protein belongs to the Clp1 family. Clp1 subfamily. Component of a pre-mRNA cleavage factor complex. Interacts directly with PCF11.

It is found in the nucleus. In terms of biological role, required for endonucleolytic cleavage during polyadenylation-dependent pre-mRNA 3'-end formation. The polypeptide is mRNA cleavage and polyadenylation factor CLP1 (Lodderomyces elongisporus (strain ATCC 11503 / CBS 2605 / JCM 1781 / NBRC 1676 / NRRL YB-4239) (Yeast)).